Consider the following 317-residue polypeptide: tRNA pseudouridine synthase B (317 aa).

Residue aspartate 47 is the Nucleophile of the active site.

It belongs to the pseudouridine synthase TruB family. Type 1 subfamily.

The enzyme catalyses uridine(55) in tRNA = pseudouridine(55) in tRNA. Functionally, responsible for synthesis of pseudouridine from uracil-55 in the psi GC loop of transfer RNAs. This is tRNA pseudouridine synthase B from Shewanella sp. (strain MR-7).